Consider the following 360-residue polypeptide: Phospho-N-acetylmuramoyl-pentapeptide-transferase (360 aa).

The next 10 membrane-spanning stretches (helical) occupy residues 21–41 (YVTF…LWWG), 74–94 (MGGI…GDLG), 97–117 (YVWV…IDDY), 134–154 (YILQ…SADM), 168–188 (IMPQ…VGSS), 199–219 (GLAI…AYLS), 236–256 (AGEL…FLWF), 263–283 (VFMG…IAVL), 288–308 (ILLV…ILQV), and 338–358 (VIVR…ATLK).

The protein belongs to the glycosyltransferase 4 family. MraY subfamily. Requires Mg(2+) as cofactor.

The protein resides in the cell inner membrane. The catalysed reaction is UDP-N-acetyl-alpha-D-muramoyl-L-alanyl-gamma-D-glutamyl-meso-2,6-diaminopimeloyl-D-alanyl-D-alanine + di-trans,octa-cis-undecaprenyl phosphate = di-trans,octa-cis-undecaprenyl diphospho-N-acetyl-alpha-D-muramoyl-L-alanyl-D-glutamyl-meso-2,6-diaminopimeloyl-D-alanyl-D-alanine + UMP. It functions in the pathway cell wall biogenesis; peptidoglycan biosynthesis. Its function is as follows. Catalyzes the initial step of the lipid cycle reactions in the biosynthesis of the cell wall peptidoglycan: transfers peptidoglycan precursor phospho-MurNAc-pentapeptide from UDP-MurNAc-pentapeptide onto the lipid carrier undecaprenyl phosphate, yielding undecaprenyl-pyrophosphoryl-MurNAc-pentapeptide, known as lipid I. The protein is Phospho-N-acetylmuramoyl-pentapeptide-transferase of Shewanella woodyi (strain ATCC 51908 / MS32).